Reading from the N-terminus, the 404-residue chain is Cysteine desulfurase IscS (404 aa).

Residues 75 to 76 (AT), Asn-155, Gln-183, and 203 to 205 (SGH) contribute to the pyridoxal 5'-phosphate site. Lys-206 carries the post-translational modification N6-(pyridoxal phosphate)lysine. Residue Thr-243 participates in pyridoxal 5'-phosphate binding. Cys-328 (cysteine persulfide intermediate) is an active-site residue. Residue Cys-328 coordinates [2Fe-2S] cluster.

Belongs to the class-V pyridoxal-phosphate-dependent aminotransferase family. NifS/IscS subfamily. As to quaternary structure, homodimer. Forms a heterotetramer with IscU, interacts with other sulfur acceptors. Pyridoxal 5'-phosphate is required as a cofactor.

It is found in the cytoplasm. The enzyme catalyses (sulfur carrier)-H + L-cysteine = (sulfur carrier)-SH + L-alanine. The protein operates within cofactor biosynthesis; iron-sulfur cluster biosynthesis. Functionally, master enzyme that delivers sulfur to a number of partners involved in Fe-S cluster assembly, tRNA modification or cofactor biosynthesis. Catalyzes the removal of elemental sulfur atoms from cysteine to produce alanine. Functions as a sulfur delivery protein for Fe-S cluster synthesis onto IscU, an Fe-S scaffold assembly protein, as well as other S acceptor proteins. In Shewanella halifaxensis (strain HAW-EB4), this protein is Cysteine desulfurase IscS.